Consider the following 118-residue polypeptide: uncharacterized protein (118 aa).

The segment at 1 to 118 is disordered; it reads MASARGAKQS…AARQNEKTAR (118 aa). Low complexity predominate over residues 13–28; the sequence is RVGTTRYTETSTVRVE. Residues 29-49 are compositionally biased toward basic and acidic residues; that stretch reads TSSHRVETSSRRVETSQRRSE.

This is an uncharacterized protein from Homo sapiens (Human).